The chain runs to 567 residues: 2-succinyl-5-enolpyruvyl-6-hydroxy-3-cyclohexene-1-carboxylate synthase (567 aa).

It belongs to the TPP enzyme family. MenD subfamily. Homodimer. It depends on Mg(2+) as a cofactor. Mn(2+) serves as cofactor. Thiamine diphosphate is required as a cofactor.

It carries out the reaction isochorismate + 2-oxoglutarate + H(+) = 5-enolpyruvoyl-6-hydroxy-2-succinyl-cyclohex-3-ene-1-carboxylate + CO2. It participates in quinol/quinone metabolism; 1,4-dihydroxy-2-naphthoate biosynthesis; 1,4-dihydroxy-2-naphthoate from chorismate: step 2/7. The protein operates within quinol/quinone metabolism; menaquinone biosynthesis. Its function is as follows. Catalyzes the thiamine diphosphate-dependent decarboxylation of 2-oxoglutarate and the subsequent addition of the resulting succinic semialdehyde-thiamine pyrophosphate anion to isochorismate to yield 2-succinyl-5-enolpyruvyl-6-hydroxy-3-cyclohexene-1-carboxylate (SEPHCHC). The polypeptide is 2-succinyl-5-enolpyruvyl-6-hydroxy-3-cyclohexene-1-carboxylate synthase (Shewanella loihica (strain ATCC BAA-1088 / PV-4)).